Reading from the N-terminus, the 612-residue chain is Dihydroxy-acid dehydratase (612 aa).

A Mg(2+)-binding site is contributed by aspartate 81. Cysteine 122 provides a ligand contact to [2Fe-2S] cluster. Mg(2+) is bound by residues aspartate 123 and lysine 124. Lysine 124 bears the N6-carboxylysine mark. Position 193 (cysteine 193) interacts with [2Fe-2S] cluster. Glutamate 489 provides a ligand contact to Mg(2+). Serine 515 functions as the Proton acceptor in the catalytic mechanism.

The protein belongs to the IlvD/Edd family. Homodimer. Requires [2Fe-2S] cluster as cofactor. Mg(2+) serves as cofactor.

The catalysed reaction is (2R)-2,3-dihydroxy-3-methylbutanoate = 3-methyl-2-oxobutanoate + H2O. It carries out the reaction (2R,3R)-2,3-dihydroxy-3-methylpentanoate = (S)-3-methyl-2-oxopentanoate + H2O. It functions in the pathway amino-acid biosynthesis; L-isoleucine biosynthesis; L-isoleucine from 2-oxobutanoate: step 3/4. Its pathway is amino-acid biosynthesis; L-valine biosynthesis; L-valine from pyruvate: step 3/4. Functions in the biosynthesis of branched-chain amino acids. Catalyzes the dehydration of (2R,3R)-2,3-dihydroxy-3-methylpentanoate (2,3-dihydroxy-3-methylvalerate) into 2-oxo-3-methylpentanoate (2-oxo-3-methylvalerate) and of (2R)-2,3-dihydroxy-3-methylbutanoate (2,3-dihydroxyisovalerate) into 2-oxo-3-methylbutanoate (2-oxoisovalerate), the penultimate precursor to L-isoleucine and L-valine, respectively. The polypeptide is Dihydroxy-acid dehydratase (Pseudomonas paraeruginosa (strain DSM 24068 / PA7) (Pseudomonas aeruginosa (strain PA7))).